We begin with the raw amino-acid sequence, 161 residues long: MLTHLDSQGRANMVDVTDKAVTSREAVAEAFVRMLPTTLQMIVSGGHPKGDVFAVARIAGIQAAKKTSDLIPLCHPLMLTSIKVHLAAEGDDAVRITASCKLAGQTGVEMEALTAASVAALTIYDMCKAVDRGMVIESVRLLEKLGGKSGHFIADQAQVSS.

Substrate-binding positions include 73–75 (LCH) and 110–111 (ME). Residue Asp-125 is part of the active site.

Belongs to the MoaC family. Homohexamer; trimer of dimers.

It carries out the reaction (8S)-3',8-cyclo-7,8-dihydroguanosine 5'-triphosphate = cyclic pyranopterin phosphate + diphosphate. It participates in cofactor biosynthesis; molybdopterin biosynthesis. Its function is as follows. Catalyzes the conversion of (8S)-3',8-cyclo-7,8-dihydroguanosine 5'-triphosphate to cyclic pyranopterin monophosphate (cPMP). The sequence is that of Cyclic pyranopterin monophosphate synthase from Pseudomonas syringae pv. syringae (strain B728a).